Consider the following 201-residue polypeptide: Pyridoxine/pyridoxamine 5'-phosphate oxidase (201 aa).

Residues 45-50, 65-66, Arg-71, Lys-72, and Gln-94 each bind FMN; these read RMVLLK and YT. A substrate-binding site is contributed by Lys-50. Residues Tyr-112, Arg-116, and Ser-120 each contribute to the substrate site. Residues 129 to 130 and Trp-174 contribute to the FMN site; that span reads QS. 180–182 is a substrate binding site; that stretch reads RLH. Arg-184 contacts FMN.

Belongs to the pyridoxamine 5'-phosphate oxidase family. Homodimer. FMN serves as cofactor.

The catalysed reaction is pyridoxamine 5'-phosphate + O2 + H2O = pyridoxal 5'-phosphate + H2O2 + NH4(+). It catalyses the reaction pyridoxine 5'-phosphate + O2 = pyridoxal 5'-phosphate + H2O2. Its pathway is cofactor metabolism; pyridoxal 5'-phosphate salvage; pyridoxal 5'-phosphate from pyridoxamine 5'-phosphate: step 1/1. It participates in cofactor metabolism; pyridoxal 5'-phosphate salvage; pyridoxal 5'-phosphate from pyridoxine 5'-phosphate: step 1/1. Catalyzes the oxidation of either pyridoxine 5'-phosphate (PNP) or pyridoxamine 5'-phosphate (PMP) into pyridoxal 5'-phosphate (PLP). In Rhodospirillum rubrum (strain ATCC 11170 / ATH 1.1.1 / DSM 467 / LMG 4362 / NCIMB 8255 / S1), this protein is Pyridoxine/pyridoxamine 5'-phosphate oxidase.